Reading from the N-terminus, the 280-residue chain is Clathrin adapter accessory protein LAA2 (280 aa).

Residues 1 to 26 (MSDRDQIEPVTNALDAESDSSDDFGN) form a disordered region. The short motif at 19–30 (DSSDDFGNFSDA) is the Ear-binding motif element.

Interacts with the clathrin-associated adapter complex AP-1. Interacts with LAA1.

The protein resides in the cytoplasmic vesicle. The protein localises to the clathrin-coated vesicle. Involved in localization of clathrin-associated adapter complex (AP-1) and subsequent AP-1-mediated clathrin-coated vesicle cargo loading. Directly mediates the interaction between LAA1 and AP-1 which is required for AP-1 localization. In complex with LAA1, cooperates with the small GTPase ARF1 and the phosphatidyl-inositol-4-phosphate (PI4P) synthesis to confer temporal specificity to AP-1 recruitment. This Saccharomyces cerevisiae (strain ATCC 204508 / S288c) (Baker's yeast) protein is Clathrin adapter accessory protein LAA2.